A 320-amino-acid chain; its full sequence is 4-hydroxy-3-methylbut-2-enyl diphosphate reductase (320 aa).

Residue C13 coordinates [4Fe-4S] cluster. (2E)-4-hydroxy-3-methylbut-2-enyl diphosphate-binding residues include H41 and H75. The dimethylallyl diphosphate site is built by H41 and H75. Isopentenyl diphosphate-binding residues include H41 and H75. C97 provides a ligand contact to [4Fe-4S] cluster. H125 contributes to the (2E)-4-hydroxy-3-methylbut-2-enyl diphosphate binding site. Dimethylallyl diphosphate is bound at residue H125. Position 125 (H125) interacts with isopentenyl diphosphate. The active-site Proton donor is E127. T168 lines the (2E)-4-hydroxy-3-methylbut-2-enyl diphosphate pocket. Residue C225 coordinates [4Fe-4S] cluster. The (2E)-4-hydroxy-3-methylbut-2-enyl diphosphate site is built by S253, S254, N255, and S302. Dimethylallyl diphosphate-binding residues include S253, S254, N255, and S302. The isopentenyl diphosphate site is built by S253, S254, N255, and S302.

It belongs to the IspH family. [4Fe-4S] cluster is required as a cofactor.

The enzyme catalyses isopentenyl diphosphate + 2 oxidized [2Fe-2S]-[ferredoxin] + H2O = (2E)-4-hydroxy-3-methylbut-2-enyl diphosphate + 2 reduced [2Fe-2S]-[ferredoxin] + 2 H(+). It catalyses the reaction dimethylallyl diphosphate + 2 oxidized [2Fe-2S]-[ferredoxin] + H2O = (2E)-4-hydroxy-3-methylbut-2-enyl diphosphate + 2 reduced [2Fe-2S]-[ferredoxin] + 2 H(+). It functions in the pathway isoprenoid biosynthesis; dimethylallyl diphosphate biosynthesis; dimethylallyl diphosphate from (2E)-4-hydroxy-3-methylbutenyl diphosphate: step 1/1. The protein operates within isoprenoid biosynthesis; isopentenyl diphosphate biosynthesis via DXP pathway; isopentenyl diphosphate from 1-deoxy-D-xylulose 5-phosphate: step 6/6. Catalyzes the conversion of 1-hydroxy-2-methyl-2-(E)-butenyl 4-diphosphate (HMBPP) into a mixture of isopentenyl diphosphate (IPP) and dimethylallyl diphosphate (DMAPP). Acts in the terminal step of the DOXP/MEP pathway for isoprenoid precursor biosynthesis. The polypeptide is 4-hydroxy-3-methylbut-2-enyl diphosphate reductase (Chlorobium luteolum (strain DSM 273 / BCRC 81028 / 2530) (Pelodictyon luteolum)).